A 417-amino-acid polypeptide reads, in one-letter code: MDRREEEEEETGYGEKGTRNQSKEDESRLGKIFELIPLDMIPDILLRLPAKSAVRFRIVSKLWLSITTRPYFIRSFAFPSSTRLCLMACVKARDMRLFISLHQHDDGSYAHVDRCEIKSPKHDYYNPSSESVNGLVCFGDFYNIVVWNPSMRQHVTLPEPKPHSTVRYFIRSCLGYDPVEDKYKVLSISGYHNGNHDPLVFTLGPQESWRVIQNSPLDIPLPTGGSRVGTCINGHVYYEAQIRFKVDDIFNFENILMSFDVRYEKFNTIKKPADPTLRNFMLNYQGKLAWFCSDYSSIRFWVLDDGDKQEWSLKNFILPFPISPEIDPIFECRVMLTGVTHDTGEFIFINATMCDAFCVLYYDPKSGSERRIEYEGIGDREFCINTGILECKRFTIDWFPNHNESLMSLVNVLKKAD.

Residues 1-12 (MDRREEEEEETG) show a composition bias toward acidic residues. A disordered region spans residues 1–25 (MDRREEEEEETGYGEKGTRNQSKED). Over residues 16–25 (KGTRNQSKED) the composition is skewed to basic and acidic residues. Residues 30–76 (GKIFELIPLDMIPDILLRLPAKSAVRFRIVSKLWLSITTRPYFIRSF) enclose the F-box domain.

This is Putative F-box protein At4g21240 from Arabidopsis thaliana (Mouse-ear cress).